Here is a 225-residue protein sequence, read N- to C-terminus: Ribosomal RNA small subunit methyltransferase G (225 aa).

S-adenosyl-L-methionine contacts are provided by residues Gly96, Phe101, 146–147 (AE), and Arg160.

It belongs to the methyltransferase superfamily. RNA methyltransferase RsmG family.

The protein localises to the cytoplasm. Specifically methylates the N7 position of a guanine in 16S rRNA. The protein is Ribosomal RNA small subunit methyltransferase G of Mycoplasma mobile (strain ATCC 43663 / 163K / NCTC 11711) (Mesomycoplasma mobile).